Consider the following 377-residue polypeptide: Uroporphyrinogen decarboxylase (377 aa).

Residues 40–44, Asp-89, Tyr-169, Ser-224, and His-354 contribute to the substrate site; that span reads RQAGR.

It belongs to the uroporphyrinogen decarboxylase family. As to quaternary structure, homodimer.

The protein resides in the cytoplasm. The catalysed reaction is uroporphyrinogen III + 4 H(+) = coproporphyrinogen III + 4 CO2. It functions in the pathway porphyrin-containing compound metabolism; protoporphyrin-IX biosynthesis; coproporphyrinogen-III from 5-aminolevulinate: step 4/4. Its function is as follows. Catalyzes the decarboxylation of four acetate groups of uroporphyrinogen-III to yield coproporphyrinogen-III. This chain is Uroporphyrinogen decarboxylase, found in Leifsonia xyli subsp. xyli (strain CTCB07).